The chain runs to 232 residues: 7-cyano-7-deazaguanine synthase (232 aa).

Position 8-18 (Phe8–Leu18) interacts with ATP. Cys187, Cys196, Cys199, and Cys202 together coordinate Zn(2+).

Belongs to the QueC family. The cofactor is Zn(2+).

It catalyses the reaction 7-carboxy-7-deazaguanine + NH4(+) + ATP = 7-cyano-7-deazaguanine + ADP + phosphate + H2O + H(+). It participates in purine metabolism; 7-cyano-7-deazaguanine biosynthesis. Catalyzes the ATP-dependent conversion of 7-carboxy-7-deazaguanine (CDG) to 7-cyano-7-deazaguanine (preQ(0)). This chain is 7-cyano-7-deazaguanine synthase, found in Vibrio campbellii (strain ATCC BAA-1116).